Here is a 109-residue protein sequence, read N- to C-terminus: Red pigment-concentrating prohormone (109 aa).

An N-terminal signal peptide occupies residues 1-25 (MVRRSGVTLLVVALLVVTLMSSVSA). Glutamine 26 carries the pyrrolidone carboxylic acid modification. Position 33 is a tryptophan amide (tryptophan 33). The interval 34-78 (GKRAAGASGSNGGVGEAVSGLHPSVGGAPGGVVPPGSSSPGDSCG) is disordered. 2 stretches are compositionally biased toward low complexity: residues 49–59 (EAVSGLHPSVG) and 67–78 (PPGSSSPGDSCG).

The protein belongs to the AKH/HRTH/RPCH family.

It localises to the secreted. Functionally, this hormone adapts the animal to light backgrounds by stimulating concentration of the pigment of its red body-chromatophores. In Callinectes sapidus (Blue crab), this protein is Red pigment-concentrating prohormone.